Here is a 264-residue protein sequence, read N- to C-terminus: Protein GrpE (264 aa).

Positions 36–49 (KVQSKKVSSDHSSS) are enriched in basic and acidic residues. The interval 36–59 (KVQSKKVSSDHSSSEDNASSDINS) is disordered. A compositionally biased stretch (low complexity) spans 50 to 59 (EDNASSDINS).

The protein belongs to the GrpE family. In terms of assembly, homodimer.

Its subcellular location is the cytoplasm. In terms of biological role, participates actively in the response to hyperosmotic and heat shock by preventing the aggregation of stress-denatured proteins, in association with DnaK and GrpE. It is the nucleotide exchange factor for DnaK and may function as a thermosensor. Unfolded proteins bind initially to DnaJ; upon interaction with the DnaJ-bound protein, DnaK hydrolyzes its bound ATP, resulting in the formation of a stable complex. GrpE releases ADP from DnaK; ATP binding to DnaK triggers the release of the substrate protein, thus completing the reaction cycle. Several rounds of ATP-dependent interactions between DnaJ, DnaK and GrpE are required for fully efficient folding. The polypeptide is Protein GrpE (Peanut witches'-broom phytoplasma).